The chain runs to 292 residues: MKNKIKYVYSDLDGTIVSWNPKNQFTHQGKTYKNLHEVSHATVTAFKQLQAQGIKIGIVTGRDYCRVRWLEKYLNTDLPTITLDGAIIYFRDEIIRQEVLDKEFIHGINQIVKRYPTAAFKLNMGWGNYYTCNPSLIFEGDHAYREHFNADSKFYRKEIDNTVDWDINNMKVNQVYFDTFTCPEPMIQELDNLVEKSDVTAKSYRHSLYIIKKGVSKASALQNLQRDFLVEMKPANTIVFGDGDNDIEMMQWADHSVSLTGSDPECYKLAKYHTDSVDDDGIAKWINKNLLC.

The active-site Nucleophile is Asp11. Asp11 lines the Mg(2+) pocket. Leu12 provides a ligand contact to phosphate. Residue Asp13 participates in Mg(2+) binding. Residues 60-61 (TG) and Lys217 each bind phosphate. Mg(2+) is bound at residue Asp242. Asn245 is a binding site for phosphate.

The protein belongs to the HAD-like hydrolase superfamily. Cof family. Mg(2+) is required as a cofactor.

In Mycoplasma pneumoniae (strain ATCC 29342 / M129 / Subtype 1) (Mycoplasmoides pneumoniae), this protein is Putative phosphatase MPN_381.